The chain runs to 719 residues: DNA ligase (719 aa).

NAD(+)-binding positions include 42-46 (DAEYD), 91-92 (SL), and Glu125. The active-site N6-AMP-lysine intermediate is the Lys127. Positions 148, 184, 300, and 324 each coordinate NAD(+). Zn(2+)-binding residues include Cys429, Cys432, Cys447, and Cys453. The 82-residue stretch at 638-719 (TASSPIAEKI…WMRLIKGHNI (82 aa)) folds into the BRCT domain.

It belongs to the NAD-dependent DNA ligase family. LigA subfamily. It depends on Mg(2+) as a cofactor. Mn(2+) serves as cofactor.

The enzyme catalyses NAD(+) + (deoxyribonucleotide)n-3'-hydroxyl + 5'-phospho-(deoxyribonucleotide)m = (deoxyribonucleotide)n+m + AMP + beta-nicotinamide D-nucleotide.. DNA ligase that catalyzes the formation of phosphodiester linkages between 5'-phosphoryl and 3'-hydroxyl groups in double-stranded DNA using NAD as a coenzyme and as the energy source for the reaction. It is essential for DNA replication and repair of damaged DNA. This chain is DNA ligase, found in Bartonella tribocorum (strain CIP 105476 / IBS 506).